The chain runs to 181 residues: Large ribosomal subunit protein uL6 (181 aa).

Belongs to the universal ribosomal protein uL6 family. In terms of assembly, part of the 50S ribosomal subunit.

In terms of biological role, this protein binds to the 23S rRNA, and is important in its secondary structure. It is located near the subunit interface in the base of the L7/L12 stalk, and near the tRNA binding site of the peptidyltransferase center. The sequence is that of Large ribosomal subunit protein uL6 from Saccharolobus solfataricus (strain ATCC 35092 / DSM 1617 / JCM 11322 / P2) (Sulfolobus solfataricus).